The sequence spans 828 residues: DNA gyrase subunit A (828 aa).

Residues Leu32–Leu497 form the Topo IIA-type catalytic domain. Tyr120 acts as the O-(5'-phospho-DNA)-tyrosine intermediate in catalysis. The short motif at Gln524–Gly530 is the GyrA-box element.

This sequence belongs to the type II topoisomerase GyrA/ParC subunit family. As to quaternary structure, heterotetramer, composed of two GyrA and two GyrB chains. In the heterotetramer, GyrA contains the active site tyrosine that forms a transient covalent intermediate with DNA, while GyrB binds cofactors and catalyzes ATP hydrolysis.

It is found in the cytoplasm. It catalyses the reaction ATP-dependent breakage, passage and rejoining of double-stranded DNA.. A type II topoisomerase that negatively supercoils closed circular double-stranded (ds) DNA in an ATP-dependent manner to modulate DNA topology and maintain chromosomes in an underwound state. Negative supercoiling favors strand separation, and DNA replication, transcription, recombination and repair, all of which involve strand separation. Also able to catalyze the interconversion of other topological isomers of dsDNA rings, including catenanes and knotted rings. Type II topoisomerases break and join 2 DNA strands simultaneously in an ATP-dependent manner. The sequence is that of DNA gyrase subunit A from Streptococcus pyogenes serotype M6 (strain ATCC BAA-946 / MGAS10394).